Reading from the N-terminus, the 480-residue chain is Islet cell autoantigen 1 (480 aa).

One can recognise an AH domain in the interval 50-253; the sequence is ASDADLDAKL…TSHTMAAIHE (204 aa). Composition is skewed to basic and acidic residues over residues 276–293 and 306–321; these read LVEK…REAV and ENQH…EEGK. 2 disordered regions span residues 276-338 and 400-421; these read LVEK…ACSG and LKEP…IGSA.

It is found in the cytoplasm. The protein resides in the cytosol. It localises to the golgi apparatus membrane. Its subcellular location is the cytoplasmic vesicle. The protein localises to the secretory vesicle membrane. It is found in the secretory vesicle. The protein resides in the synaptic vesicle membrane. In terms of biological role, may play a role in neurotransmitter secretion. The protein is Islet cell autoantigen 1 of Rattus norvegicus (Rat).